The chain runs to 381 residues: Dual-specificity RNA methyltransferase RlmN (381 aa).

The Proton acceptor role is filled by E95. Residues 101–347 enclose the Radical SAM core domain; that stretch reads EDDRGTLCVS…TTVRKTRGDD (247 aa). C108 and C352 are oxidised to a cystine. [4Fe-4S] cluster-binding residues include C115, C119, and C122. Residues 178 to 179, S210, 232 to 234, and N309 contribute to the S-adenosyl-L-methionine site; these read GE and SLH. C352 serves as the catalytic S-methylcysteine intermediate.

It belongs to the radical SAM superfamily. RlmN family. It depends on [4Fe-4S] cluster as a cofactor.

The protein resides in the cytoplasm. The enzyme catalyses adenosine(2503) in 23S rRNA + 2 reduced [2Fe-2S]-[ferredoxin] + 2 S-adenosyl-L-methionine = 2-methyladenosine(2503) in 23S rRNA + 5'-deoxyadenosine + L-methionine + 2 oxidized [2Fe-2S]-[ferredoxin] + S-adenosyl-L-homocysteine. It carries out the reaction adenosine(37) in tRNA + 2 reduced [2Fe-2S]-[ferredoxin] + 2 S-adenosyl-L-methionine = 2-methyladenosine(37) in tRNA + 5'-deoxyadenosine + L-methionine + 2 oxidized [2Fe-2S]-[ferredoxin] + S-adenosyl-L-homocysteine. In terms of biological role, specifically methylates position 2 of adenine 2503 in 23S rRNA and position 2 of adenine 37 in tRNAs. m2A2503 modification seems to play a crucial role in the proofreading step occurring at the peptidyl transferase center and thus would serve to optimize ribosomal fidelity. In Bordetella petrii (strain ATCC BAA-461 / DSM 12804 / CCUG 43448), this protein is Dual-specificity RNA methyltransferase RlmN.